A 382-amino-acid polypeptide reads, in one-letter code: 26S proteasome non-ATPase regulatory subunit 6 (382 aa).

In terms of domain architecture, PCI spans 186–354 (QFKEASDLYL…GVIETTRSDA (169 aa)).

This sequence belongs to the proteasome subunit S10 family.

Functionally, acts as a regulatory subunit of the 26S proteasome which is involved in the ATP-dependent degradation of ubiquitinated proteins. This Dictyostelium discoideum (Social amoeba) protein is 26S proteasome non-ATPase regulatory subunit 6 (psmD6).